The sequence spans 145 residues: Nicking endonuclease (145 aa).

Residues asparagine 126 to leucine 145 form a disordered region.

Its function is as follows. Endonuclease responsible for the single-chain interruptions (nicks) located at specific positions in the minus strand of the viral genome. The protein is Nicking endonuclease of Escherichia phage T5 (Enterobacteria phage T5).